A 300-amino-acid polypeptide reads, in one-letter code: F-box/LRR-repeat protein 15 (300 aa).

N-acetylmethionine is present on Met1. The F-box domain maps to 19–66; sequence FLDLPWEDVLLPHVLNRVPLRQLLRLQRVSRAFRSLVQLHLAGLRRFD. The interval 113-269 is interaction with SMURF1; that stretch reads NPQLRSVALG…ESSLSRLRKR (157 aa). 5 LRR repeats span residues 141-162, 167-188, 194-215, 220-241, and 246-267; these read RLQR…RGLA, ALEE…VYLA, GLRS…QELA, ELHH…RTLA, and VLRS…SRLR.

This sequence belongs to the FBXL15 family. As to quaternary structure, part of the SCF (SKP1-CUL1-F-box) E3 ubiquitin-protein ligase complex SCF(FBXL15) composed of CUL1, SKP1, RBX1 and FBXL15.

The protein localises to the cytoplasm. It functions in the pathway protein modification; protein ubiquitination. Its function is as follows. Substrate recognition component of a SCF (SKP1-CUL1-F-box protein) E3 ubiquitin-protein ligase complex which mediates the ubiquitination and subsequent proteasomal degradation of SMURF1, thereby acting as a positive regulator of the BMP signaling pathway. Required for dorsal/ventral pattern formation and bone mass maintenance. Also mediates ubiquitination of SMURF2 and WWP2. This chain is F-box/LRR-repeat protein 15 (FBXL15), found in Homo sapiens (Human).